Here is a 285-residue protein sequence, read N- to C-terminus: Shikimate dehydrogenase (NADP(+)) (285 aa).

Residues 21–23 (SRS) and T68 each bind shikimate. The active-site Proton acceptor is the K72. NADP(+) is bound at residue E83. The shikimate site is built by N92 and D107. NADP(+)-binding positions include 132–136 (GAGGS), 156–161 (NRTMER), and L221. Y223 contacts shikimate. G244 contacts NADP(+).

It belongs to the shikimate dehydrogenase family. Homodimer.

It catalyses the reaction shikimate + NADP(+) = 3-dehydroshikimate + NADPH + H(+). It participates in metabolic intermediate biosynthesis; chorismate biosynthesis; chorismate from D-erythrose 4-phosphate and phosphoenolpyruvate: step 4/7. In terms of biological role, involved in the biosynthesis of the chorismate, which leads to the biosynthesis of aromatic amino acids. Catalyzes the reversible NADPH linked reduction of 3-dehydroshikimate (DHSA) to yield shikimate (SA). The chain is Shikimate dehydrogenase (NADP(+)) from Nitrobacter hamburgensis (strain DSM 10229 / NCIMB 13809 / X14).